We begin with the raw amino-acid sequence, 489 residues long: Dipeptide and tripeptide permease B (489 aa).

At 1-27 the chain is on the cytoplasmic side; that stretch reads MNTTTPMGMLQQPRPFFMIFFVELWER. Residues 28–48 form a helical membrane-spanning segment; that stretch reads FGYYGVQGVLAVFFVKQLGFS. Over 49 to 52 the chain is Periplasmic; it reads QEQA. A helical membrane pass occupies residues 53–73; it reads FVTFGAFAALVYGLISIGGYV. Residues 74–82 lie on the Cytoplasmic side of the membrane; it reads GDHLLGTKR. Residues 83 to 103 traverse the membrane as a helical segment; sequence TIVLGALVLAIGYFMTGLSLL. Over 104–106 the chain is Periplasmic; that stretch reads KPD. Residues 107-127 traverse the membrane as a helical segment; that stretch reads LIFIALGTIAVGNGLFKANPA. Over 128-146 the chain is Cytoplasmic; sequence SLLSKCYPPKAPRLDGAFT. Residues 147 to 167 form a helical membrane-spanning segment; the sequence is LFYMSINIGSLIALSLAPVIA. Over 168 to 172 the chain is Periplasmic; the sequence is DRFGY. The helical transmembrane segment at 173 to 193 threads the bilayer; the sequence is SVTYNLCGAGLIIALLVYIAC. Over 194–210 the chain is Cytoplasmic; that stretch reads RGMVKDIGSEPDFRPMS. Residues 211 to 231 traverse the membrane as a helical segment; that stretch reads FSKLLYVLLGSVVMIFVCAWL. Residues 232-233 lie on the Periplasmic side of the membrane; it reads MH. Residues 234–254 form a helical membrane-spanning segment; sequence NVEVANLVLIVLSIVVTIIFF. Residues 255 to 267 are Cytoplasmic-facing; that stretch reads RQAFKLDKTGRNK. A helical transmembrane segment spans residues 268-288; it reads MFVAFVLMLEAVVFYILYAQM. At 289–311 the chain is on the periplasmic side; the sequence is PTSLNFFAINNVHHEILGFSINP. The helical transmembrane segment at 312–332 threads the bilayer; the sequence is VSFQALNPFWVVLASPILAGI. Residues 333–350 lie on the Cytoplasmic side of the membrane; that stretch reads YTHLGSKGKDLSMPMKFT. A helical membrane pass occupies residues 351 to 371; it reads LGMFMCSLGFLTAAAAGMWFA. The Periplasmic segment spans residues 372–380; the sequence is DAQGLTSPW. A helical transmembrane segment spans residues 381–401; that stretch reads FIVLVYLFQSLGELFISALGL. Over 402–411 the chain is Cytoplasmic; that stretch reads AMVAALVPQH. Residues 412-432 traverse the membrane as a helical segment; it reads LMGFILGISFLTQAAAFLLGG. Topologically, residues 433-456 are periplasmic; sequence YVATFTAVPDNITDPLETLPVYTN. Residues 457–477 form a helical membrane-spanning segment; that stretch reads VFGKIGLVTLGVAVVMLLMVP. At 478–489 the chain is on the cytoplasmic side; the sequence is WLKRMIAAPESH.

This sequence belongs to the major facilitator superfamily. Proton-dependent oligopeptide transporter (POT/PTR) (TC 2.A.17) family. DtpB subfamily.

It localises to the cell inner membrane. In terms of biological role, proton-dependent permease that transports di- and tripeptides. This is Dipeptide and tripeptide permease B from Shigella dysenteriae serotype 1 (strain Sd197).